The sequence spans 185 residues: Ribosome-recycling factor (185 aa).

The protein belongs to the RRF family.

It localises to the cytoplasm. Its function is as follows. Responsible for the release of ribosomes from messenger RNA at the termination of protein biosynthesis. May increase the efficiency of translation by recycling ribosomes from one round of translation to another. The chain is Ribosome-recycling factor from Campylobacter jejuni subsp. jejuni serotype O:23/36 (strain 81-176).